A 288-amino-acid polypeptide reads, in one-letter code: Homoserine kinase (288 aa).

Residue 79–89 (PPARGLGSSSA) coordinates ATP.

It belongs to the GHMP kinase family. Homoserine kinase subfamily.

It localises to the cytoplasm. The enzyme catalyses L-homoserine + ATP = O-phospho-L-homoserine + ADP + H(+). The protein operates within amino-acid biosynthesis; L-threonine biosynthesis; L-threonine from L-aspartate: step 4/5. Catalyzes the ATP-dependent phosphorylation of L-homoserine to L-homoserine phosphate. The protein is Homoserine kinase of Listeria monocytogenes serotype 4a (strain HCC23).